The chain runs to 838 residues: Transient receptor potential cation channel subfamily V member 1 (838 aa).

2 disordered regions span residues 1–63 and 86–109; these read MEQR…PLDC and RPGD…EKPP. Residues 1–432 are Cytoplasmic-facing; it reads MEQRASLDSE…QDKWDRFVKR (432 aa). The stretch at 110 to 138 is one ANK 1 repeat; the sequence is RLYDRRSIFDAVAQSNCQELESLLPFLQR. Position 115 (Arg-115) interacts with ATP. Residue Ser-116 is modified to Phosphoserine; by PKA and PKD. The residue at position 144 (Thr-144) is a Phosphothreonine; by PKA; in vitro. The stretch at 153–185 is one ANK 2 repeat; sequence TGKTCLLKAMLNLHNGQNDTIALLLDVARKTDS. Residues Lys-155, Lys-160, Asn-164, 199-202, and 210-211 contribute to the ATP site; these read YKGQ and ER. 4 ANK repeats span residues 203–228, 249–276, 285–321, and 335–358; these read TALH…ADVQ, ELPL…QPAD, NTVL…KLHP, and TPLA…REIH. Phosphothreonine; by PKA; in vitro is present on Thr-370. One copy of the ANK 7 repeat lies at 393 to 415; it reads NSVLEVIAYSSSETPNRHDMLLV. A helical transmembrane segment spans residues 433 to 453; sequence IFYFNFFVYCLYMIIFTAAAY. The Extracellular segment spans residues 454–471; it reads YRPVEGLPPYKLKNTVGD. The chain crosses the membrane as a helical span at residues 472-497; it reads YFRVTGEILSVSGGVYFFFRGIQYFL. The Cytoplasmic segment spans residues 498-510; sequence QRRPSLKSLFVDS. Ser-502 carries the phosphoserine; by PKC/PRKCE modification. 511–512 contacts resiniferatoxin; sequence YS. Residues 511-531 form a helical membrane-spanning segment; the sequence is YSEILFFVQSLFMLVSVVLYF. Over 532 to 535 the chain is Extracellular; the sequence is SQRK. Residues 536 to 556 form a helical membrane-spanning segment; that stretch reads EYVASMVFSLAMGWTNMLYYT. Resiniferatoxin contacts are provided by Thr-550 and Arg-557. Residues 557-571 lie on the Cytoplasmic side of the membrane; sequence RGFQQMGIYAVMIEK. The chain crosses the membrane as a helical span at residues 572–599; the sequence is MILRDLCRFMFVYLVFLFGFSTAVVTLI. Topologically, residues 600-626 are extracellular; that stretch reads EDGKNNSLPMESTPHKCRGSACKPGNS. Asn-604 carries N-linked (GlcNAc...) asparagine glycosylation. An intramembrane region (pore-forming) is located at residues 627-649; the sequence is YNSLYSTCLELFKFTIGMGDLEF. Gly-643 lines the Na(+) pocket. The Selectivity filter motif lies at 643–646; sequence GMGD. Asp-646 is a binding site for Ca(2+). Residues 650–657 are Extracellular-facing; that stretch reads TENYDFKA. The helical transmembrane segment at 658–686 threads the bilayer; it reads VFIILLLAYVILTYILLLNMLIALMGETV. Residues 684–712 form an AD region; the sequence is ETVNKIAQESKNIWKLQRAITILDTEKSF. Residues 687-838 are Cytoplasmic-facing; it reads NKIAQESKNI…FKDSMVPGEK (152 aa). Position 704 is a phosphothreonine (Thr-704). An interaction with calmodulin region spans residues 767–801; sequence EGVKRTLSFSLRSGRVSGRNWKNFALVPLLRDAST. Ser-774 bears the Phosphoserine; by PKA; in vitro mark. The interval 777–792 is required for PIP2-mediated channel inhibition; that stretch reads LRSGRVSGRNWKNFAL. The residue at position 800 (Ser-800) is a Phosphoserine; by PKC/PRKCE and PKC/PRKCZ. Ser-820 carries the post-translational modification Phosphoserine; by PKA; in vitro.

The protein belongs to the transient receptor (TC 1.A.4) family. TrpV subfamily. TRPV1 sub-subfamily. As to quaternary structure, homotetramer. Interacts with PIRT. May also form a heteromeric channel with TRPV3. Interacts with CALM, PRKCM and CSK. Interacts with PRKCG and NTRK1, probably by forming a trimeric complex. Interacts with the Scolopendra mutilans RhTx toxin. Interacts with the spider Tau-theraphotoxin-Hs1a. Interacts with TMEM100. Interacts with PACS2. Post-translationally, phosphorylation by PKA reverses capsaicin-induced dephosphorylation at multiple sites, probably including Ser-116 as a major phosphorylation site. Phosphorylation by CAMKII seems to regulate binding to vanilloids. Phosphorylated and modulated by PRKCE, PRKCM and probably PRKCZ. Dephosphorylation by calcineurin seems to lead to receptor desensitization and phosphorylation by CAMKII recovers activity. As to expression, predominantly expressed in trigeminal and dorsal root sensory ganglia. Expressed also in hippocampus, cortex, cerebellum, olfactory bulb, mesencephalon and hindbrain. High expression in the cell bodies and dendrites of neurons in the hippocampus and in the cortex. In the brain detected also in astrocytes and pericytes (at protein level). Isoform 1 and isoform 3 are expressed in brain and peripheral blood mononuclear cells.

It localises to the postsynaptic cell membrane. It is found in the cell projection. Its subcellular location is the dendritic spine membrane. The protein localises to the cell membrane. The catalysed reaction is Ca(2+)(in) = Ca(2+)(out). It carries out the reaction Mg(2+)(in) = Mg(2+)(out). It catalyses the reaction Na(+)(in) = Na(+)(out). The enzyme catalyses K(+)(in) = K(+)(out). Channel activity is activated via the interaction with PIRT and phosphatidylinositol 4,5-bisphosphate (PIP2). Both PIRT and PIP2 are required to activate channel activity. The channel is sensitized by ATP binding. Repeated stimulation with capsaicin gives rise to progressively smaller responses, due to desensitization. This desensitization is triggered by the influx of calcium ions and is inhibited by elevated ATP levels. Ca(2+) and CALM displace ATP from its binding site and trigger a conformation change that leads to a closed, desensitized channel. Intracellular PIP2 inhibits desensitization. The double-knot toxin (DkTx) from the Chinese earth tiger tarantula activates the channel and traps it in an open conformation. The Scolopendra mutilans RhTx toxin potentiates the heat activation pathway mediated by this channel by binding to the charge-rich outer pore region (in an activated state). Functionally, non-selective calcium permeant cation channel involved in detection of noxious chemical and thermal stimuli. Seems to mediate proton influx and may be involved in intracellular acidosis in nociceptive neurons. Involved in mediation of inflammatory pain and hyperalgesia. Sensitized by a phosphatidylinositol second messenger system activated by receptor tyrosine kinases, which involves PKC isozymes and PCL. Activation by vanilloids, like capsaicin, and temperatures higher than 42 degrees Celsius. Upon activation, exhibits a time- and Ca(2+)-dependent outward rectification, followed by a long-lasting refractory state. Mild extracellular acidic pH (6.5) potentiates channel activation by noxious heat and vanilloids, whereas acidic conditions (pH &lt;6) directly activate the channel. Can be activated by endogenous compounds, including 12-hydroperoxytetraenoic acid and bradykinin. Acts as ionotropic endocannabinoid receptor with central neuromodulatory effects. Triggers a form of long-term depression (TRPV1-LTD) mediated by the endocannabinoid anandamine in the hippocampus and nucleus accumbens by affecting AMPA receptors endocytosis. In terms of biological role, does not display channel activity in response to noxious chemical compounds, such as capsaicin and the vanilloid resiniferatoxin. Channel activity is not elicited by mildly acidic extracellular pH, and only slight channel activity is observed in response to noxiuos heat stimuli. This chain is Transient receptor potential cation channel subfamily V member 1 (Trpv1), found in Rattus norvegicus (Rat).